We begin with the raw amino-acid sequence, 433 residues long: Oxidoreductase acuF (433 aa).

The protein operates within secondary metabolite biosynthesis. Oxidoreductase; part of the gene cluster that mediates the biosynthesis of aculins. The pathway begins with the synthesis of 6-methylsalicylic acid by the polyketide synthase (PKS) acuA via condensation of acetate and malonate units. The 6-methylsalicylic acid decarboxylase acuB then catalyzes the decarboxylation of 6-methylsalicylic acid to yield m-cresol (also known as 3-methylphenol). These first reactions occur in the cytosol. The intermediate m-cresol is then transported into the endoplasmic reticulum where the cytochrome P450 monooxygenase acuC converts it to m-hydroxybenzyl alcohol, which is further converted to gentisyl alcohol by the cytochrome P450 monooxygenase acuD. Gentisyl alcohol is further oxidized by the oxidoreductase acuE that probably catalyzes hydroxylation of the aromatic ring. The aromatic system might then be opened by oxidation through a Baeyer-Villiger type of oxidation, which could be catalyzed by acuF, with the carboxylic acid at C-1 subsequently reduced to an aldehyde by acuG. Subsequently, a hemiacetal is formed, before the dehydrogenase acuH would reduce the double bond between C-4 and C-6. Finally, keto-enol tautomerism results in formation of aculinic acid, which exists as two diastereomers (both R/S configurations at C-1) by non-enzymatic hemiacetal formation. The carboxypeptidase acuI could be involved in the linking of aculinic acid to an aculene A moiety produced by the aculene biosynthesis cluster and which leads to the production of aculin A. AcuI may also be involved in the attachment of proline to aculinic acid to form epi-aculins A and B. This Aspergillus aculeatus (strain ATCC 16872 / CBS 172.66 / WB 5094) protein is Oxidoreductase acuF.